The primary structure comprises 363 residues: Fructose-bisphosphate aldolase (363 aa).

Substrate-binding residues include arginine 56 and lysine 147. The active-site Proton acceptor is glutamate 188. Lysine 230 acts as the Schiff-base intermediate with dihydroxyacetone-P in catalysis.

It belongs to the class I fructose-bisphosphate aldolase family.

It carries out the reaction beta-D-fructose 1,6-bisphosphate = D-glyceraldehyde 3-phosphate + dihydroxyacetone phosphate. It participates in carbohydrate degradation; glycolysis; D-glyceraldehyde 3-phosphate and glycerone phosphate from D-glucose: step 4/4. The protein is Fructose-bisphosphate aldolase of Schistosoma mansoni (Blood fluke).